The sequence spans 209 residues: Thymidylate kinase (209 aa).

10–17 (GLEGAGKS) lines the ATP pocket.

It belongs to the thymidylate kinase family.

It catalyses the reaction dTMP + ATP = dTDP + ADP. Its function is as follows. Phosphorylation of dTMP to form dTDP in both de novo and salvage pathways of dTTP synthesis. This is Thymidylate kinase from Photobacterium profundum (strain SS9).